The sequence spans 605 residues: Tegument protein UL47 homolog (605 aa).

The interval M1–D75 is disordered. Positions P8–S17 are enriched in basic residues. Positions G54–K69 are enriched in basic and acidic residues.

This sequence belongs to the alphaherpesvirinae HHV-1 UL47 family. In terms of assembly, interacts with US3 kinase. Interacts with UL31 and UL34; these interactions seem important for efficient virion nuclear egress. Interacts with UL41/VHS. Phosphorylated by US3. This phosphorylation is required for proper nuclear localization.

The protein localises to the virion tegument. The protein resides in the host nucleus. It is found in the host cytoplasm. Its function is as follows. Tegument protein that can bind to various RNA transcripts. Plays a role in the attenuation of selective viral and cellular mRNA degradation by modulating the activity of host shutoff RNase UL41/VHS. Also plays a role in the primary envelopment of virions in the perinuclear space, probably by interacting with two nuclear egress proteins UL31 and UL34. The protein is Tegument protein UL47 homolog (sORF1) of Amazona oratrix (yellow-headed parrot).